Consider the following 350-residue polypeptide: B1 bradykinin receptor (350 aa).

The Extracellular portion of the chain corresponds to 1–41 (MASRAPLELLPLNRSQLSPPNATTCDDAPEAWDLLHRVLPS). 2 N-linked (GlcNAc...) asparagine glycosylation sites follow: asparagine 13 and asparagine 21. The chain crosses the membrane as a helical span at residues 42–62 (VIIIICVCGLLGNLLVLAVLL). The Cytoplasmic segment spans residues 63–72 (RPRRRLNVAE). The chain crosses the membrane as a helical span at residues 73 to 93 (MYLANLAASDLVFVLGLPFWA). Over 94–110 (ANISNQFRWPFGGLLCR) the chain is Extracellular. Residue asparagine 95 is glycosylated (N-linked (GlcNAc...) asparagine). A disulfide bridge connects residues cysteine 109 and cysteine 186. A helical membrane pass occupies residues 111–131 (LVNGVIKANLFISIFLVVAIS). Over 132–150 (RDRYRALVHPMATRRRRQA) the chain is Cytoplasmic. Residues 151–171 (RATCVLIWVAGSLLSVPTFLF) form a helical membrane-spanning segment. Residues 172-204 (RSIEAVPELNNDSACVLLHPPGAWHVARMVELN) lie on the Extracellular side of the membrane. N-linked (GlcNAc...) asparagine glycosylation is present at asparagine 182. A helical transmembrane segment spans residues 205–225 (VLGFLLPLAAIVFFNCHILAS). Residues 226–248 (LRGRPEVRGARCGGPPDGRTTAL) are Cytoplasmic-facing. The chain crosses the membrane as a helical span at residues 249–269 (ILTFVAAFLVCWTPYHFFAFL). The Extracellular segment spans residues 270 to 292 (EFLTQVQVVRGCFWENFKDLGLQ). A helical transmembrane segment spans residues 293-313 (YASFFAFINSCLNPVIYVFVG). Over 314-350 (RLFRTRVWDLFKQCAPRRPPAVSWSHRKRVLQLFWQN) the chain is Cytoplasmic. Residue cysteine 327 is the site of S-palmitoyl cysteine attachment.

It belongs to the G-protein coupled receptor 1 family. Bradykinin receptor subfamily. BDKRB1 sub-subfamily.

The protein localises to the cell membrane. Functionally, this is a receptor for bradykinin. Could be a factor in chronic pain and inflammation. This chain is B1 bradykinin receptor (BDKRB1), found in Canis lupus familiaris (Dog).